Reading from the N-terminus, the 359-residue chain is MAPPRPPRLLPALRALLYWSLVYGYCGLCASVHLLKLLWSIGRAPAQTFRRAARANPPACLNDPSLGTHCYVRIKDSGLRFHYVAAGERGKPLMLLLHGFPEFWYSWRHQLREFKSEYRVVALDLRGYGESDAPAHQESYKLDCLIADIKDILDSLGYSKCVLIGHDWGGMIAWLIAVCYPEMIMKLIVINFPHPSVFTEYILRHPAQLFRSSFYYFFQIPRFPEFMFSINDFKALKHLFTSQSTGIGRKGRQLTTEDLEAYVYVFSQPGALSGPINHYRNIFSCLPLKHHMVTTPTLLLWGEEDAFMEVEMAEVTKIYVKNYFRLTILSEGSHWLQQDQPDIVNGLIWAFLKEETRRD.

Residues 15–35 (ALLYWSLVYGYCGLCASVHLL) traverse the membrane as a helical; Signal-anchor for type II membrane protein segment. The region spanning 92-337 (PLMLLLHGFP…ILSEGSHWLQ (246 aa)) is the AB hydrolase-1 domain. Residue Asp167 is the Nucleophile of the active site. Tyr279 acts as the Proton donor in catalysis. The Proton acceptor role is filled by His334.

This sequence belongs to the AB hydrolase superfamily. Epoxide hydrolase family.

The protein localises to the membrane. In Mus musculus (Mouse), this protein is Epoxide hydrolase 4 (Ephx4).